The following is a 40-amino-acid chain: Photosystem II reaction center protein J (40 aa).

The chain crosses the membrane as a helical span at residues 10 to 30 (LWLVGTVAGTLVIGLLGVFFY).

This sequence belongs to the PsbJ family. In terms of assembly, PSII is composed of 1 copy each of membrane proteins PsbA, PsbB, PsbC, PsbD, PsbE, PsbF, PsbH, PsbI, PsbJ, PsbK, PsbL, PsbM, PsbT, PsbX, PsbY, PsbZ, Psb30/Ycf12, at least 3 peripheral proteins of the oxygen-evolving complex and a large number of cofactors. It forms dimeric complexes.

Its subcellular location is the plastid. It is found in the chloroplast thylakoid membrane. Functionally, one of the components of the core complex of photosystem II (PSII). PSII is a light-driven water:plastoquinone oxidoreductase that uses light energy to abstract electrons from H(2)O, generating O(2) and a proton gradient subsequently used for ATP formation. It consists of a core antenna complex that captures photons, and an electron transfer chain that converts photonic excitation into a charge separation. The sequence is that of Photosystem II reaction center protein J from Adiantum capillus-veneris (Maidenhair fern).